Here is a 345-residue protein sequence, read N- to C-terminus: tRNA pseudouridine synthase B (345 aa).

Asp-39 serves as the catalytic Nucleophile.

The protein belongs to the pseudouridine synthase TruB family. Type 1 subfamily.

It carries out the reaction uridine(55) in tRNA = pseudouridine(55) in tRNA. In terms of biological role, responsible for synthesis of pseudouridine from uracil-55 in the psi GC loop of transfer RNAs. The polypeptide is tRNA pseudouridine synthase B (Rickettsia peacockii (strain Rustic)).